The primary structure comprises 151 residues: Myosin light polypeptide 6 (151 aa).

Cys-2 bears the N-acetylcysteine mark. In terms of domain architecture, EF-hand 1 spans 7–42 (DQTAEFKEAFQLFDRTGDGKILYSQCGDVMRALGQN). Phosphoserine is present on Ser-57. Lys-81 is subject to N6-acetyllysine. In terms of domain architecture, EF-hand 2 spans 84–119 (GTYEDYVEGLRVFDKEGNGTVMGAEIRHVLVTLGEK).

In terms of assembly, myosin is a hexamer of 2 heavy chains and 4 light chains. Interacts with SPATA6.

Functionally, regulatory light chain of myosin. Does not bind calcium. The chain is Myosin light polypeptide 6 (MYL6) from Bos taurus (Bovine).